Consider the following 535-residue polypeptide: CTP synthase (535 aa).

Positions 1–267 (MTKYIFVTGG…DQIVCDHLKL (267 aa)) are amidoligase domain. Serine 13 is a CTP binding site. UTP is bound at residue serine 13. Residue 14 to 19 (SLGKGI) participates in ATP binding. Tyrosine 54 provides a ligand contact to L-glutamine. Aspartate 71 serves as a coordination point for ATP. Aspartate 71 and glutamate 141 together coordinate Mg(2+). CTP contacts are provided by residues 148-150 (DIE), 188-193 (KTKPTQ), and lysine 224. UTP is bound by residues 188–193 (KTKPTQ) and lysine 224. Residue 240 to 242 (RDA) coordinates ATP. Residues 292–534 (KIALVGKYVE…VRASITNKES (243 aa)) enclose the Glutamine amidotransferase type-1 domain. Residue glycine 354 participates in L-glutamine binding. Cysteine 381 functions as the Nucleophile; for glutamine hydrolysis in the catalytic mechanism. L-glutamine is bound by residues 382 to 385 (LGMQ), glutamate 405, and arginine 462. Catalysis depends on residues histidine 507 and glutamate 509.

This sequence belongs to the CTP synthase family. Homotetramer.

It carries out the reaction UTP + L-glutamine + ATP + H2O = CTP + L-glutamate + ADP + phosphate + 2 H(+). The enzyme catalyses L-glutamine + H2O = L-glutamate + NH4(+). It catalyses the reaction UTP + NH4(+) + ATP = CTP + ADP + phosphate + 2 H(+). Its pathway is pyrimidine metabolism; CTP biosynthesis via de novo pathway; CTP from UDP: step 2/2. Allosterically activated by GTP, when glutamine is the substrate; GTP has no effect on the reaction when ammonia is the substrate. The allosteric effector GTP functions by stabilizing the protein conformation that binds the tetrahedral intermediate(s) formed during glutamine hydrolysis. Inhibited by the product CTP, via allosteric rather than competitive inhibition. In terms of biological role, catalyzes the ATP-dependent amination of UTP to CTP with either L-glutamine or ammonia as the source of nitrogen. Regulates intracellular CTP levels through interactions with the four ribonucleotide triphosphates. The sequence is that of CTP synthase from Bacillus cereus (strain G9842).